Here is a 258-residue protein sequence, read N- to C-terminus: MLAKRIIPCLDVKDGQVVKGVQFRNHEIIGDIVPLAQRYAQEGADELVFYDITASSDGRVVDKSWVARVAEVIDIPFCVAGGIKSVEDASQILTFGADKISINSPALADPTLITRLADRYGVQCIVVGIDTWYDTESDSYQVYQFTGDEKRTKATTWQTEDWVKEVQLRGAGEIVLNMMNQDGVRNGYDLRQLQQMRAICHVPLIASGGAGTPEHFLEAFRDADVDGALAASVFHKQIINIGELKKYLSEQGVEIRVC.

Active-site residues include Asp-11 and Asp-130.

Belongs to the HisA/HisF family. Heterodimer of HisH and HisF.

The protein localises to the cytoplasm. It catalyses the reaction 5-[(5-phospho-1-deoxy-D-ribulos-1-ylimino)methylamino]-1-(5-phospho-beta-D-ribosyl)imidazole-4-carboxamide + L-glutamine = D-erythro-1-(imidazol-4-yl)glycerol 3-phosphate + 5-amino-1-(5-phospho-beta-D-ribosyl)imidazole-4-carboxamide + L-glutamate + H(+). The protein operates within amino-acid biosynthesis; L-histidine biosynthesis; L-histidine from 5-phospho-alpha-D-ribose 1-diphosphate: step 5/9. In terms of biological role, IGPS catalyzes the conversion of PRFAR and glutamine to IGP, AICAR and glutamate. The HisF subunit catalyzes the cyclization activity that produces IGP and AICAR from PRFAR using the ammonia provided by the HisH subunit. This is Imidazole glycerol phosphate synthase subunit HisF from Yersinia pseudotuberculosis serotype IB (strain PB1/+).